Consider the following 76-residue polypeptide: Cytochrome c oxidase subunit 6C-1 (76 aa).

Over 4 to 14 (GALLPKPQMHD) the chain is Mitochondrial matrix. A helical transmembrane segment spans residues 15–55 (PLSKRLWVHIVGAFIVDLGVAAAHKFGAAKPRKKAYADFYR). Over 56-76 (NHDPMKDFDEMRKAGVFRSVK) the chain is Mitochondrial intermembrane.

It belongs to the cytochrome c oxidase subunit 6c family. As to quaternary structure, component of the cytochrome c oxidase (complex IV, CIV), a multisubunit enzyme composed of 14 subunits. The complex is composed of a catalytic core of 3 subunits MT-CO1, MT-CO2 and MT-CO3, encoded in the mitochondrial DNA, and 11 supernumerary subunits COX4I, COX5A, COX5B, COX6A, COX6B, COX6C, COX7A, COX7B, COX7C, COX8 and NDUFA4, which are encoded in the nuclear genome. The complex exists as a monomer or a dimer and forms supercomplexes (SCs) in the inner mitochondrial membrane with NADH-ubiquinone oxidoreductase (complex I, CI) and ubiquinol-cytochrome c oxidoreductase (cytochrome b-c1 complex, complex III, CIII), resulting in different assemblies (supercomplex SCI(1)III(2)IV(1) and megacomplex MCI(2)III(2)IV(2)).

Its subcellular location is the mitochondrion inner membrane. Its pathway is energy metabolism; oxidative phosphorylation. In terms of biological role, component of the cytochrome c oxidase, the last enzyme in the mitochondrial electron transport chain which drives oxidative phosphorylation. The respiratory chain contains 3 multisubunit complexes succinate dehydrogenase (complex II, CII), ubiquinol-cytochrome c oxidoreductase (cytochrome b-c1 complex, complex III, CIII) and cytochrome c oxidase (complex IV, CIV), that cooperate to transfer electrons derived from NADH and succinate to molecular oxygen, creating an electrochemical gradient over the inner membrane that drives transmembrane transport and the ATP synthase. Cytochrome c oxidase is the component of the respiratory chain that catalyzes the reduction of oxygen to water. Electrons originating from reduced cytochrome c in the intermembrane space (IMS) are transferred via the dinuclear copper A center (CU(A)) of subunit 2 and heme A of subunit 1 to the active site in subunit 1, a binuclear center (BNC) formed by heme A3 and copper B (CU(B)). The BNC reduces molecular oxygen to 2 water molecules using 4 electrons from cytochrome c in the IMS and 4 protons from the mitochondrial matrix. The sequence is that of Cytochrome c oxidase subunit 6C-1 (Cox6c1) from Rattus norvegicus (Rat).